The following is a 924-amino-acid chain: Isoleucine--tRNA ligase (924 aa).

Positions 58–68 (PYANGQIHVGH) match the 'HIGH' region motif. L-isoleucyl-5'-AMP is bound at residue glutamate 561. The 'KMSKS' region motif lies at 602–606 (KMSKS). Lysine 605 lines the ATP pocket. 4 residues coordinate Zn(2+): cysteine 887, cysteine 890, cysteine 907, and cysteine 910.

It belongs to the class-I aminoacyl-tRNA synthetase family. IleS type 1 subfamily. As to quaternary structure, monomer. Zn(2+) is required as a cofactor.

The protein resides in the cytoplasm. It catalyses the reaction tRNA(Ile) + L-isoleucine + ATP = L-isoleucyl-tRNA(Ile) + AMP + diphosphate. In terms of biological role, catalyzes the attachment of isoleucine to tRNA(Ile). As IleRS can inadvertently accommodate and process structurally similar amino acids such as valine, to avoid such errors it has two additional distinct tRNA(Ile)-dependent editing activities. One activity is designated as 'pretransfer' editing and involves the hydrolysis of activated Val-AMP. The other activity is designated 'posttransfer' editing and involves deacylation of mischarged Val-tRNA(Ile). The chain is Isoleucine--tRNA ligase from Dichelobacter nodosus (strain VCS1703A).